A 219-amino-acid chain; its full sequence is UPF0502 protein GSU0233 (219 aa).

This sequence belongs to the UPF0502 family.

In Geobacter sulfurreducens (strain ATCC 51573 / DSM 12127 / PCA), this protein is UPF0502 protein GSU0233.